The following is a 217-amino-acid chain: Tectonin-1 (217 aa).

6 consecutive repeat copies span residues Val2–Gly37, His38–Asn74, Asn75–His111, Asn112–Gly146, Ser147–Gly182, and Lys183–Leu217. Residues Val2–Leu217 form a 6 X approximate tandem repeats region.

The protein belongs to the tectonin family.

It is found in the cell surface. Its subcellular location is the cytoplasmic vesicle membrane. Probably involved in bacterial recognition. May be a lectin that function as part of a transmembrane signaling complex during phagocytosis. The chain is Tectonin-1 (TECA) from Physarum polycephalum (Slime mold).